The sequence spans 252 residues: Small ribosomal subunit protein uS3 (252 aa).

Residues 39–111 enclose the KH type-2 domain; it reads IRKLINNFTK…DVNLNVLEVK (73 aa). A disordered region spans residues 222–252; the sequence is KPFASQSSNTPNRRPRNFKGGNNNHVNAKKN. Over residues 241 to 252 the composition is skewed to polar residues; the sequence is GGNNNHVNAKKN.

The protein belongs to the universal ribosomal protein uS3 family. In terms of assembly, part of the 30S ribosomal subunit. Forms a tight complex with proteins S10 and S14.

Its function is as follows. Binds the lower part of the 30S subunit head. Binds mRNA in the 70S ribosome, positioning it for translation. The polypeptide is Small ribosomal subunit protein uS3 (Onion yellows phytoplasma (strain OY-M)).